The chain runs to 1091 residues: ATP-dependent helicase/deoxyribonuclease subunit B (1091 aa).

It belongs to the helicase family. AddB/RexB type 2 subfamily. In terms of assembly, heterodimer of AddA and RexB. It depends on Mg(2+) as a cofactor.

In terms of biological role, the heterodimer acts as both an ATP-dependent DNA helicase and an ATP-dependent, dual-direction single-stranded exonuclease. Recognizes the chi site generating a DNA molecule suitable for the initiation of homologous recombination. This subunit has 5' -&gt; 3' nuclease activity but not helicase activity. The chain is ATP-dependent helicase/deoxyribonuclease subunit B from Streptococcus pneumoniae (strain ATCC 700669 / Spain 23F-1).